The sequence spans 140 residues: ATP synthase epsilon chain (140 aa).

The protein belongs to the ATPase epsilon chain family. In terms of assembly, F-type ATPases have 2 components, CF(1) - the catalytic core - and CF(0) - the membrane proton channel. CF(1) has five subunits: alpha(3), beta(3), gamma(1), delta(1), epsilon(1). CF(0) has three main subunits: a, b and c.

It localises to the cell inner membrane. Functionally, produces ATP from ADP in the presence of a proton gradient across the membrane. The polypeptide is ATP synthase epsilon chain (Legionella pneumophila (strain Lens)).